We begin with the raw amino-acid sequence, 362 residues long: Peptide chain release factor 1 (362 aa).

Gln-235 is modified (N5-methylglutamine).

The protein belongs to the prokaryotic/mitochondrial release factor family. Methylated by PrmC. Methylation increases the termination efficiency of RF1.

It is found in the cytoplasm. Peptide chain release factor 1 directs the termination of translation in response to the peptide chain termination codons UAG and UAA. This Acinetobacter baumannii (strain AYE) protein is Peptide chain release factor 1.